We begin with the raw amino-acid sequence, 333 residues long: Starch-binding domain-containing protein 1 (333 aa).

The Extracellular portion of the chain corresponds to 1–6 (MGAVWS). The helical transmembrane segment at 7–23 (ALLVGGGLAGALILWLL) threads the bilayer. Residues 24–333 (RGDSGAPGKD…KVVHGWWGIH (310 aa)) lie on the Cytoplasmic side of the membrane. Disordered stretches follow at residues 31–73 (GKDG…ELVS) and 106–139 (NARE…RVGE). A compositionally biased stretch (gly residues) spans 50 to 61 (PGGGPGGGGSGG). Ser67 carries the phosphoserine modification. Residues 124-134 (NSETSRNQSPE) show a composition bias toward polar residues. Phosphoserine is present on residues Ser135 and Ser162. The short motif at 181-187 (HEDWEVV) is the LIR element. A phosphoserine mark is found at Ser191, Ser192, Ser201, Ser205, Ser208, Ser216, and Ser219. In terms of domain architecture, CBM20 spans 233–332 (SVKPRQVSIQ…DKVVHGWWGI (100 aa)).

In terms of assembly, interacts with the ATG8 family proteins GABARAP and GABARAPL1. Interacts with several glycogen-associated proteins, such as GYS2 (liver glycogen synthase), GDE (glycogen debranching enzyme), GBE1 (glycogen branching enzyme 1) and EPM2A (Laforin). In terms of processing, ubiquitinated, which leads to proteasomal degradation.

It is found in the preautophagosomal structure membrane. Its subcellular location is the endoplasmic reticulum membrane. It localises to the cell membrane. The protein localises to the sarcolemma. The protein resides in the T-tubule. Functionally, acts as a cargo receptor for glycogen. Delivers its cargo to an autophagic pathway called glycophagy, resulting in the transport of glycogen to lysosomes. The protein is Starch-binding domain-containing protein 1 of Rattus norvegicus (Rat).